A 457-amino-acid polypeptide reads, in one-letter code: Protein unc-93 homolog A (457 aa).

The next 5 membrane-spanning stretches (helical) occupy residues 8–28, 42–62, 65–85, 86–106, and 140–160; these read VLVL…LQSL, ALST…PVLI, LGCK…SLGN, FYAS…GAAA, and IFFL…SLVF. Asn-190 carries N-linked (GlcNAc...) asparagine glycosylation. 6 consecutive transmembrane segments (helical) span residues 202–222, 257–277, 291–311, 320–340, 344–364, and 395–415; these read TLLG…AVFL, LRLL…LSGD, FVGY…VLFG, TVLF…LLLW, PSQL…DAVW, and FVIA…YVLL. The tract at residues 438–457 is disordered; it reads GPLAAGRTKPAEDGATQTKL.

It belongs to the unc-93 family.

Its subcellular location is the cell membrane. The protein is Protein unc-93 homolog A (UNC93A) of Bos taurus (Bovine).